Reading from the N-terminus, the 315-residue chain is MKFKHTSVLLHETIDNLKPKNGGLYVDATFGGGGHAKYLLSKIETGTLVGFDQDEYAIKSAELNFADLLQPDSEPRLKLVHDNFSNLEQDLVKLGYSDGIDGIYYDLGVSSPQFDQADRGFSYRYNARLDMRMDQSQDTDAYQLVNTLSQKELADILYQYGDEKFSRQIAHRIVERRKDKPIVTTFELVDIIKEAIPAYARRTGGHPAKKSFQALRVAVNHELDVLQASLEEAIRILRPGGRISVITFQSHEDKIVKKIFKKYSEVEVPRGMPFVPDDMKPTLRLENRKPITASTSELENNNRSHSAKLRVAEKL.

S-adenosyl-L-methionine-binding positions include 33–35, Asp52, Phe84, Asp106, and Gln113; that span reads GGH. The interval 290–315 is disordered; the sequence is PITASTSELENNNRSHSAKLRVAEKL. Over residues 292-304 the composition is skewed to polar residues; that stretch reads TASTSELENNNRS.

It belongs to the methyltransferase superfamily. RsmH family.

The protein resides in the cytoplasm. It catalyses the reaction cytidine(1402) in 16S rRNA + S-adenosyl-L-methionine = N(4)-methylcytidine(1402) in 16S rRNA + S-adenosyl-L-homocysteine + H(+). Specifically methylates the N4 position of cytidine in position 1402 (C1402) of 16S rRNA. The sequence is that of Ribosomal RNA small subunit methyltransferase H from Lactobacillus helveticus (strain DPC 4571).